The chain runs to 344 residues: Phenylalanine--tRNA ligase alpha subunit (344 aa).

Glutamate 259 lines the Mg(2+) pocket.

Belongs to the class-II aminoacyl-tRNA synthetase family. Phe-tRNA synthetase alpha subunit type 1 subfamily. As to quaternary structure, tetramer of two alpha and two beta subunits. It depends on Mg(2+) as a cofactor.

The protein localises to the cytoplasm. The enzyme catalyses tRNA(Phe) + L-phenylalanine + ATP = L-phenylalanyl-tRNA(Phe) + AMP + diphosphate + H(+). The chain is Phenylalanine--tRNA ligase alpha subunit from Petrotoga mobilis (strain DSM 10674 / SJ95).